Consider the following 322-residue polypeptide: Transmembrane and ubiquitin-like domain-containing protein 2 (322 aa).

A helical membrane pass occupies residues 38 to 58 (VVAGVVVLILALVLAWLSTYV). The disordered stretch occupies residues 88 to 168 (VAGQGTPEPT…VRSEDSTCLP (81 aa)). The segment covering 115–130 (EGGGDPTGEPGAGGGV) has biased composition (gly residues). One can recognise a Ubiquitin-like domain in the interval 174–247 (ISVRLKFFND…IHCHRSPPGS (74 aa)). The next 2 helical transmembrane spans lie at 267–287 (LGVS…GVVW) and 296–316 (FFTA…SFLV).

The protein resides in the membrane. The protein is Transmembrane and ubiquitin-like domain-containing protein 2 (TMUB2) of Bos taurus (Bovine).